A 544-amino-acid polypeptide reads, in one-letter code: Membrane protein insertase YidC (544 aa).

The helical transmembrane segment at 6-26 threads the bilayer; it reads NILLIGLLFVSFLLWQQWQAD. Positions 34 to 58 are disordered; sequence AAQTQSSIPASTVADSHSSDVPDAD. The segment covering 39 to 49 has biased composition (polar residues); that stretch reads SSIPASTVADS. Transmembrane regions (helical) follow at residues 345 to 365, 423 to 443, 460 to 480, and 503 to 523; these read LLMF…LITL, GGCL…WVLL, LSVQ…MFVM, and VIFT…WLVG.

It belongs to the OXA1/ALB3/YidC family. Type 1 subfamily. In terms of assembly, interacts with the Sec translocase complex via SecD. Specifically interacts with transmembrane segments of nascent integral membrane proteins during membrane integration.

It localises to the cell inner membrane. Functionally, required for the insertion and/or proper folding and/or complex formation of integral membrane proteins into the membrane. Involved in integration of membrane proteins that insert both dependently and independently of the Sec translocase complex, as well as at least some lipoproteins. Aids folding of multispanning membrane proteins. This Shewanella halifaxensis (strain HAW-EB4) protein is Membrane protein insertase YidC.